The chain runs to 264 residues: Probable amino-acid-binding protein YxeM (264 aa).

Residues 1-20 form the signal peptide; the sequence is MKMKKWTVLVVAALLAVLSA. Cys-21 is lipidated: N-palmitoyl cysteine. Cys-21 is lipidated: S-diacylglycerol cysteine.

It belongs to the bacterial solute-binding protein 3 family. As to quaternary structure, the complex is composed of two ATP-binding proteins (YxeO), two transmembrane proteins (YxeN) and a solute-binding protein (YxeM).

Its subcellular location is the cell membrane. It localises to the membrane raft. In terms of biological role, probably part of the ABC transporter complex YxeMNO that could be involved in amino-acid import. May transport S-methylcysteine. This chain is Probable amino-acid-binding protein YxeM (yxeM), found in Bacillus subtilis (strain 168).